Consider the following 476-residue polypeptide: Serine/threonine-protein kinase Chk1 (476 aa).

Residues 9 to 265 (WDLVQTLGEG…IPDIKKDRWY (257 aa)) enclose the Protein kinase domain. ATP-binding positions include 15–23 (LGEGAYGEV) and Lys-38. Catalysis depends on Asp-130, which acts as the Proton acceptor. The tract at residues 272–329 (GTKRGRVSSGGVTESPGALPKHIRSDTDFSPVKSALGEDKASYSTSQPEPGTGGALWD) is disordered. Ser-280 is modified (phosphoserine; by PKB/AKT1). A Phosphoserine modification is found at Ser-296. Ser-317 bears the Phosphoserine; by ATM and ATR mark. Position 345 is a phosphoserine (Ser-345). Positions 391 to 476 (RSLRDVCEKM…STQKVWLPPP (86 aa)) are autoinhibitory region.

Belongs to the protein kinase superfamily. CAMK Ser/Thr protein kinase family. NIM1 subfamily. Post-translationally, phosphorylated by ATR in a RAD17-dependent manner in response to ultraviolet irradiation and inhibition of DNA replication. Phosphorylated by ATM in response to ionizing irradiation. Phosphorylation at Ser-345 induces a change in the conformation of the protein and activates the kinase activity. Phosphorylation at Ser-345 also increases binding to 14-3-3 proteins and promotes nuclear retention.

It localises to the nucleus. It is found in the chromosome. Its subcellular location is the cytoplasm. The protein localises to the cytoskeleton. The protein resides in the microtubule organizing center. It localises to the centrosome. The catalysed reaction is L-seryl-[protein] + ATP = O-phospho-L-seryl-[protein] + ADP + H(+). The enzyme catalyses L-threonyl-[protein] + ATP = O-phospho-L-threonyl-[protein] + ADP + H(+). Activated through phosphorylation by atr or atm in response to DNA damage or inhibition of DNA replication. In terms of biological role, serine/threonine-protein kinase which is required for checkpoint-mediated cell cycle arrest and activation of DNA repair in response to the presence of DNA damage or unreplicated DNA. May also negatively regulate cell cycle progression during unperturbed cell cycles. This regulation is achieved by a number of mechanisms that together help to preserve the integrity of the genome. Recognizes the substrate consensus sequence [R-X-X-S/T]. Binds to and phosphorylates CDC25A, CDC25B and CDC25C. This inhibits their activity through proteasomal degradation, nucleo-cytoplasmic shuttling and inhibition by proteins of the 13-3-3 family. Inhibition of CDC25 leads to increased inhibitory tyrosine phosphorylation of CDK-cyclin complexes and blocks cell cycle progression. May promote DNA repair, regulate chromatin assembly and the transcription of genes that regulate cell-cycle progression. May also play a role in replication fork maintenance. This chain is Serine/threonine-protein kinase Chk1 (CHEK1), found in Gallus gallus (Chicken).